The following is a 499-amino-acid chain: Gamma-aminobutyric acid receptor subunit beta (499 aa).

Residues 1-23 form the signal peptide; it reads MWGIIVPFFSASLMCSLVAVVRC. At 24 to 251 the chain is on the extracellular side; the sequence is QQDTDHFANV…IFQLQRNIGY (228 aa). N-linked (GlcNAc...) asparagine glycosylation is found at N32, N98, N106, and N152. The cysteines at positions 167 and 181 are disulfide-linked. 3 helical membrane-spanning segments follow: residues 252–273, 278–299, and 311–333; these read FIFQ…SFWI, TSAR…SNGV, and AIDI…YAAV. The Cytoplasmic portion of the chain corresponds to 334–475; sequence NYTYWGARAK…RVQDVNTIDK (142 aa). A helical membrane pass occupies residues 476–499; the sequence is YARLMFPLLFIIFNTSYWSVYLLT.

Belongs to the ligand-gated ion channel (TC 1.A.9) family. Gamma-aminobutyric acid receptor (TC 1.A.9.5) subfamily. In terms of assembly, generally pentameric. There are five types of GABA(A) receptor chains: alpha, beta, gamma, delta, and rho.

It is found in the postsynaptic cell membrane. The protein resides in the cell membrane. GABA, an inhibitory neurotransmitter, mediates neuronal inhibition by binding to the GABA/benzodiazepine receptor and opening an integral chloride channel. This Lymnaea stagnalis (Great pond snail) protein is Gamma-aminobutyric acid receptor subunit beta.